The primary structure comprises 325 residues: Ribose-phosphate pyrophosphokinase 2 (325 aa).

Residue 96 to 101 (RQDKKD) participates in ATP binding. 4 residues coordinate Mg(2+): Asp-135, His-137, Asp-146, and Asp-150. ATP is bound at residue His-137. Residues 219-234 (KDRVAILVDDMADTCG) form a binding of phosphoribosylpyrophosphate region.

This sequence belongs to the ribose-phosphate pyrophosphokinase family. As to quaternary structure, homodimer. The active form is probably a hexamer composed of 3 homodimers. Mg(2+) serves as cofactor.

It catalyses the reaction D-ribose 5-phosphate + ATP = 5-phospho-alpha-D-ribose 1-diphosphate + AMP + H(+). It functions in the pathway metabolic intermediate biosynthesis; 5-phospho-alpha-D-ribose 1-diphosphate biosynthesis; 5-phospho-alpha-D-ribose 1-diphosphate from D-ribose 5-phosphate (route I): step 1/1. Its activity is regulated as follows. Activated by magnesium and inorganic phosphate. Competitively or non-competitively inhibited by ADP, 2,3-bisphosphoglyceride or GDP. In terms of biological role, catalyzes the synthesis of phosphoribosylpyrophosphate (PRPP) that is essential for nucleotide synthesis. This is Ribose-phosphate pyrophosphokinase 2 (PRPS2) from Gallus gallus (Chicken).